Here is a 430-residue protein sequence, read N- to C-terminus: Histidine--tRNA ligase (430 aa).

It belongs to the class-II aminoacyl-tRNA synthetase family. As to quaternary structure, homodimer.

The protein resides in the cytoplasm. The catalysed reaction is tRNA(His) + L-histidine + ATP = L-histidyl-tRNA(His) + AMP + diphosphate + H(+). The polypeptide is Histidine--tRNA ligase (Acinetobacter baumannii (strain ACICU)).